Reading from the N-terminus, the 545-residue chain is CTP synthase (545 aa).

The segment at 1–266 (MATNYIFVTG…DTFVCDRFRL (266 aa)) is amidoligase domain. Residue serine 14 coordinates CTP. Serine 14 is a UTP binding site. ATP-binding positions include 15 to 20 (SLGKGI) and aspartate 72. Positions 72 and 140 each coordinate Mg(2+). CTP-binding positions include 147–149 (DIE), 187–192 (KTKPTQ), and lysine 223. UTP contacts are provided by residues 187–192 (KTKPTQ) and lysine 223. 239–241 (KDV) lines the ATP pocket. The 252-residue stretch at 291–542 (TIGMVGKYVE…VKAAKDYQDS (252 aa)) folds into the Glutamine amidotransferase type-1 domain. Glycine 352 serves as a coordination point for L-glutamine. The active-site Nucleophile; for glutamine hydrolysis is cysteine 379. L-glutamine is bound by residues 380–383 (LGMQ), glutamate 403, and arginine 470. Catalysis depends on residues histidine 515 and glutamate 517.

It belongs to the CTP synthase family. In terms of assembly, homotetramer.

The enzyme catalyses UTP + L-glutamine + ATP + H2O = CTP + L-glutamate + ADP + phosphate + 2 H(+). The catalysed reaction is L-glutamine + H2O = L-glutamate + NH4(+). It carries out the reaction UTP + NH4(+) + ATP = CTP + ADP + phosphate + 2 H(+). It functions in the pathway pyrimidine metabolism; CTP biosynthesis via de novo pathway; CTP from UDP: step 2/2. Allosterically activated by GTP, when glutamine is the substrate; GTP has no effect on the reaction when ammonia is the substrate. The allosteric effector GTP functions by stabilizing the protein conformation that binds the tetrahedral intermediate(s) formed during glutamine hydrolysis. Inhibited by the product CTP, via allosteric rather than competitive inhibition. Catalyzes the ATP-dependent amination of UTP to CTP with either L-glutamine or ammonia as the source of nitrogen. Regulates intracellular CTP levels through interactions with the four ribonucleotide triphosphates. The sequence is that of CTP synthase from Actinobacillus pleuropneumoniae serotype 7 (strain AP76).